We begin with the raw amino-acid sequence, 221 residues long: Octanoyltransferase (221 aa).

Residues 38–220 (GEIPDTLLLL…GFREVLGDPG (183 aa)) form the BPL/LPL catalytic domain. Substrate is bound by residues 84–91 (RGGDATFH), 149–151 (AIG), and 163–165 (GFA). The active-site Acyl-thioester intermediate is the cysteine 181.

This sequence belongs to the LipB family.

It is found in the cytoplasm. It catalyses the reaction octanoyl-[ACP] + L-lysyl-[protein] = N(6)-octanoyl-L-lysyl-[protein] + holo-[ACP] + H(+). It participates in protein modification; protein lipoylation via endogenous pathway; protein N(6)-(lipoyl)lysine from octanoyl-[acyl-carrier-protein]: step 1/2. Its function is as follows. Catalyzes the transfer of endogenously produced octanoic acid from octanoyl-acyl-carrier-protein onto the lipoyl domains of lipoate-dependent enzymes. Lipoyl-ACP can also act as a substrate although octanoyl-ACP is likely to be the physiological substrate. The chain is Octanoyltransferase from Rubrobacter xylanophilus (strain DSM 9941 / JCM 11954 / NBRC 16129 / PRD-1).